We begin with the raw amino-acid sequence, 223 residues long: 7-cyano-7-deazaguanine synthase (223 aa).

10-20 lines the ATP pocket; the sequence is FSGGQDSTTCL. 4 residues coordinate Zn(2+): Cys188, Cys197, Cys200, and Cys203.

This sequence belongs to the QueC family. The cofactor is Zn(2+).

The enzyme catalyses 7-carboxy-7-deazaguanine + NH4(+) + ATP = 7-cyano-7-deazaguanine + ADP + phosphate + H2O + H(+). It functions in the pathway purine metabolism; 7-cyano-7-deazaguanine biosynthesis. Its function is as follows. Catalyzes the ATP-dependent conversion of 7-carboxy-7-deazaguanine (CDG) to 7-cyano-7-deazaguanine (preQ(0)). In Phocaeicola vulgatus (strain ATCC 8482 / DSM 1447 / JCM 5826 / CCUG 4940 / NBRC 14291 / NCTC 11154) (Bacteroides vulgatus), this protein is 7-cyano-7-deazaguanine synthase.